The following is a 359-amino-acid chain: Putative gluconeogenesis factor (359 aa).

A disordered region spans residues 317 to 359; sequence VGNQDSSAPTVAATEQIRLDGKRPQTGVNGPVGKGPRGDDAWR.

The protein belongs to the gluconeogenesis factor family.

It localises to the cytoplasm. Functionally, required for morphogenesis under gluconeogenic growth conditions. This Mycobacterium leprae (strain TN) protein is Putative gluconeogenesis factor.